Reading from the N-terminus, the 329-residue chain is tRNA pseudouridine synthase B (329 aa).

Histidine 43 contacts substrate. The active-site Nucleophile is the aspartate 48. Residues tyrosine 76, tyrosine 179, and leucine 200 each coordinate substrate.

This sequence belongs to the pseudouridine synthase TruB family. Type 1 subfamily.

It catalyses the reaction uridine(55) in tRNA = pseudouridine(55) in tRNA. Responsible for synthesis of pseudouridine from uracil-55 in the psi GC loop of transfer RNAs. The polypeptide is tRNA pseudouridine synthase B (Yersinia enterocolitica serotype O:8 / biotype 1B (strain NCTC 13174 / 8081)).